The primary structure comprises 387 residues: Cysteine desulfurase IscS (387 aa).

Residues 73-74, Asn155, Gln183, and 203-205 contribute to the pyridoxal 5'-phosphate site; these read AT and SAH. Lys206 carries the N6-(pyridoxal phosphate)lysine modification. Thr241 is a pyridoxal 5'-phosphate binding site. Cys328 functions as the Cysteine persulfide intermediate in the catalytic mechanism. Residue Cys328 participates in [2Fe-2S] cluster binding.

It belongs to the class-V pyridoxal-phosphate-dependent aminotransferase family. NifS/IscS subfamily. Homodimer. Forms a heterotetramer with IscU, interacts with other sulfur acceptors. Pyridoxal 5'-phosphate serves as cofactor.

The protein localises to the cytoplasm. The catalysed reaction is (sulfur carrier)-H + L-cysteine = (sulfur carrier)-SH + L-alanine. The protein operates within cofactor biosynthesis; iron-sulfur cluster biosynthesis. In terms of biological role, master enzyme that delivers sulfur to a number of partners involved in Fe-S cluster assembly, tRNA modification or cofactor biosynthesis. Catalyzes the removal of elemental sulfur atoms from cysteine to produce alanine. Functions as a sulfur delivery protein for Fe-S cluster synthesis onto IscU, an Fe-S scaffold assembly protein, as well as other S acceptor proteins. The sequence is that of Cysteine desulfurase IscS from Helicobacter pylori (strain P12).